A 118-amino-acid polypeptide reads, in one-letter code: Holo-[acyl-carrier-protein] synthase (118 aa).

Residues D8 and E58 each coordinate Mg(2+).

The protein belongs to the P-Pant transferase superfamily. AcpS family. Mg(2+) serves as cofactor.

The protein localises to the cytoplasm. The enzyme catalyses apo-[ACP] + CoA = holo-[ACP] + adenosine 3',5'-bisphosphate + H(+). Transfers the 4'-phosphopantetheine moiety from coenzyme A to a Ser of acyl-carrier-protein. This is Holo-[acyl-carrier-protein] synthase from Listeria innocua serovar 6a (strain ATCC BAA-680 / CLIP 11262).